A 166-amino-acid chain; its full sequence is Small ribosomal subunit protein uS9 (166 aa).

Residues 135–166 are disordered; sequence KKAGFLTRDPRATERKKYGLKKARKAPQYSKR. Residues 142–151 are compositionally biased toward basic and acidic residues; sequence RDPRATERKK. Positions 152–166 are enriched in basic residues; the sequence is YGLKKARKAPQYSKR.

Belongs to the universal ribosomal protein uS9 family.

The chain is Small ribosomal subunit protein uS9 from Mycobacterium avium (strain 104).